Reading from the N-terminus, the 111-residue chain is uncharacterized protein (111 aa).

The chain crosses the membrane as a helical span at residues 27–47 (HLFHFPSISFFFFFFFFFFSF).

The protein localises to the membrane. This is an uncharacterized protein from Saccharomyces cerevisiae (strain ATCC 204508 / S288c) (Baker's yeast).